A 155-amino-acid polypeptide reads, in one-letter code: Small ribosomal subunit protein uS7c (155 aa).

The protein belongs to the universal ribosomal protein uS7 family. Part of the 30S ribosomal subunit.

The protein resides in the plastid. Its subcellular location is the chloroplast. Its function is as follows. One of the primary rRNA binding proteins, it binds directly to 16S rRNA where it nucleates assembly of the head domain of the 30S subunit. The chain is Small ribosomal subunit protein uS7c (rps7) from Houttuynia cordata (Chameleon plant).